The chain runs to 298 residues: Protoheme IX farnesyltransferase (298 aa).

The next 9 membrane-spanning stretches (helical) occupy residues 26–46 (VVSL…PGVV), 52–72 (IFAT…NCLV), 99–119 (FVFL…LVNP), 120–140 (LTMW…TVIL), 148–168 (IVIG…AVTG), 174–194 (ALLL…ALAL), 219–239 (LHVL…YATQ), 241–261 (SGLI…YYAV), and 276–296 (FRYS…DHYI).

It belongs to the UbiA prenyltransferase family. Protoheme IX farnesyltransferase subfamily.

It is found in the cell inner membrane. It carries out the reaction heme b + (2E,6E)-farnesyl diphosphate + H2O = Fe(II)-heme o + diphosphate. Its pathway is porphyrin-containing compound metabolism; heme O biosynthesis; heme O from protoheme: step 1/1. Converts heme B (protoheme IX) to heme O by substitution of the vinyl group on carbon 2 of heme B porphyrin ring with a hydroxyethyl farnesyl side group. The protein is Protoheme IX farnesyltransferase of Nitrosospira multiformis (strain ATCC 25196 / NCIMB 11849 / C 71).